Consider the following 102-residue polypeptide: uncharacterized protein (102 aa).

Residues 1–21 (MAESVNENNNNAGDSNGSGRT) are disordered. An N-linked (GlcNAc...) asparagine glycan is attached at asparagine 16. A helical transmembrane segment spans residues 24 to 44 (NTIVTIVVVVIVVTLIIILAT). Residues 49–102 (IGGSGKKVGAEEPATKLSSKSDDRNGGPNKKSPAKGSSKDDNNTEESVQSNLYG) form a disordered region. Basic and acidic residues predominate over residues 56 to 73 (VGAEEPATKLSSKSDDRN). N-linked (GlcNAc...) asparagine glycosylation occurs at asparagine 90. The span at 93–102 (EESVQSNLYG) shows a compositional bias: polar residues.

The protein localises to the membrane. This is an uncharacterized protein from Encephalitozoon cuniculi (strain GB-M1) (Microsporidian parasite).